A 758-amino-acid chain; its full sequence is Meiotic driver SPOK4 (758 aa).

Positions Lys4 to Glu41 form a coiled coil. 2 disordered regions span residues Glu180–Ile230 and Leu414–Pro499. Basic and acidic residues predominate over residues Leu181–Gly190. A compositionally biased stretch (polar residues) spans Ser416–Thr429. The segment covering Asn457–Glu468 has biased composition (basic and acidic residues).

Its subcellular location is the cytoplasm. It localises to the nucleus. Functionally, promotes unequal transmission of alleles from the parental zygote to progeny spores by acting as poison/antidote system, leading to poisoning of progeny that do not inherit the allele. May possess DNA nuclease activity that leads to spore killing, and a kinase activity that confers resistance to the nuclease activity. Can suppress meiotic drive by the P.comata SPOK1 protein. This Podospora anserina (Pleurage anserina) protein is Meiotic driver SPOK4.